We begin with the raw amino-acid sequence, 280 residues long: MSNLLVFDNSVVTDEALVANIMAQNQGASHQLLERIGTQVQLPANTYASIQVFTKSPQPVTLPASLLETLSGALAPGGALFGAVDGSQVMDFIMAGLAQDGDKWVKPAATGTTLLKKSGGGPKKFAFKRASPATAAPSTNGTNPAATVNLNSVVTLSMDDDDLMDEDDLMEDDTNLSMPIKIPAKCDPGPGKKRRKACKDCTCGLKEMEEQAKDAQLAAQNTVTLSAEDTAEIDFTVQGKTGGCGSCALGDAFRCDGCPYLGLPPFKPGEAVSIGGASDL.

The tract at residues 1–121 (MSNLLVFDNS…TTLLKKSGGG (121 aa)) is N-terminal SAM-like domain. Residues 122–176 (PKKFAFKRASPATAAPSTNGTNPAATVNLNSVVTLSMDDDDLMDEDDLMEDDTNL) form a linker region. Positions 186, 198, 201, and 203 each coordinate [2Fe-2S] cluster. Residues 186 to 203 (CDPGPGKKRRKACKDCTC) form a fe-S binding site A region. The [4Fe-4S] cluster site is built by Cys244, Cys247, Cys255, and Cys258. 2 consecutive short sequence motifs (cx2C motif) follow at residues 244–247 (CGSC) and 255–258 (CDGC). The tract at residues 244–258 (CGSCALGDAFRCDGC) is fe-S binding site B.

Belongs to the anamorsin family. As to quaternary structure, monomer. Interacts with TAH18. Interacts with MIA40. [2Fe-2S] cluster serves as cofactor. It depends on [4Fe-4S] cluster as a cofactor.

The protein resides in the cytoplasm. Its subcellular location is the mitochondrion intermembrane space. Functionally, component of the cytosolic iron-sulfur (Fe-S) protein assembly (CIA) machinery required for the maturation of extramitochondrial Fe-S proteins. Part of an electron transfer chain functioning in an early step of cytosolic Fe-S biogenesis, facilitating the de novo assembly of a [4Fe-4S] cluster on the scaffold complex CFD1-NBP35. Electrons are transferred to DRE2 from NADPH via the FAD- and FMN-containing protein TAH18. TAH18-DRE2 are also required for the assembly of the diferric tyrosyl radical cofactor of ribonucleotide reductase (RNR), probably by providing electrons for reduction during radical cofactor maturation in the catalytic small subunit RNR2. This Yarrowia lipolytica (strain CLIB 122 / E 150) (Yeast) protein is Fe-S cluster assembly protein DRE2.